The chain runs to 221 residues: Thymidylate kinase (221 aa).

12–19 contributes to the ATP binding site; sequence GIDGAGKS.

It belongs to the thymidylate kinase family.

It catalyses the reaction dTMP + ATP = dTDP + ADP. Functionally, phosphorylation of dTMP to form dTDP in both de novo and salvage pathways of dTTP synthesis. The sequence is that of Thymidylate kinase from Paracidovorax citrulli (strain AAC00-1) (Acidovorax citrulli).